An 88-amino-acid chain; its full sequence is Adenylosuccinate lyase (88 aa).

N(6)-(1,2-dicarboxyethyl)-AMP is bound by residues 4–5 and 67–69; these read RY and KHD.

Belongs to the lyase 1 family. Adenylosuccinate lyase subfamily. As to quaternary structure, homotetramer and homodimer. Residues from neighboring subunits contribute catalytic and substrate-binding residues to each active site.

It carries out the reaction N(6)-(1,2-dicarboxyethyl)-AMP = fumarate + AMP. It catalyses the reaction (2S)-2-[5-amino-1-(5-phospho-beta-D-ribosyl)imidazole-4-carboxamido]succinate = 5-amino-1-(5-phospho-beta-D-ribosyl)imidazole-4-carboxamide + fumarate. The protein operates within purine metabolism; AMP biosynthesis via de novo pathway; AMP from IMP: step 2/2. Its pathway is purine metabolism; IMP biosynthesis via de novo pathway; 5-amino-1-(5-phospho-D-ribosyl)imidazole-4-carboxamide from 5-amino-1-(5-phospho-D-ribosyl)imidazole-4-carboxylate: step 2/2. In terms of biological role, catalyzes two reactions in de novo purine nucleotide biosynthesis. Catalyzes the breakdown of 5-aminoimidazole- (N-succinylocarboxamide) ribotide (SAICAR or 2-[5-amino-1-(5-phospho-beta-D-ribosyl)imidazole-4-carboxamido]succinate) to 5-aminoimidazole-4-carboxamide ribotide (AICAR or 5-amino-1-(5-phospho-beta-D-ribosyl)imidazole-4-carboxamide) and fumarate, and of adenylosuccinate (ADS or N(6)-(1,2-dicarboxyethyl)-AMP) to adenosine monophosphate (AMP) and fumarate. The chain is Adenylosuccinate lyase (purB) from Spiroplasma citri.